The chain runs to 96 residues: MEQAPGDQGPQREPYNEWALEILEELKNEAVRHFPRPWLHGLGQHIYNTYGDTWEGVEAIIRILQQLLFIHFRIGCRHSRIGIVPQRRVRNGASRS.

The homooligomerization stretch occupies residues 1–42 (MEQAPGDQGPQREPYNEWALEILEELKNEAVRHFPRPWLHGL). A phosphoserine; by host mark is found at serine 79, serine 94, and serine 96.

The protein belongs to the HIV-1 VPR protein family. In terms of assembly, homooligomer, may form homodimer. Interacts with p6-gag region of the Pr55 Gag precursor protein through a (Leu-X-X)4 motif near the C-terminus of the P6gag protein. Interacts with host UNG. May interact with host RAD23A/HHR23A. Interacts with host VPRBP/DCAF1, leading to hijack the CUL4A-RBX1-DDB1-DCAF1/VPRBP complex, mediating ubiquitination of host proteins such as TERT and ZGPAT and arrest of the cell cycle in G2 phase. In terms of processing, phosphorylated on several residues by host. These phosphorylations regulate VPR activity for the nuclear import of the HIV-1 pre-integration complex.

It localises to the virion. It is found in the host nucleus. The protein resides in the host extracellular space. During virus replication, may deplete host UNG protein, and incude G2-M cell cycle arrest. Acts by targeting specific host proteins for degradation by the 26S proteasome, through association with the cellular CUL4A-DDB1 E3 ligase complex by direct interaction with host VPRPB/DCAF-1. Cell cycle arrest reportedly occurs within hours of infection and is not blocked by antiviral agents, suggesting that it is initiated by the VPR carried into the virion. Additionally, VPR induces apoptosis in a cell cycle dependent manner suggesting that these two effects are mechanistically linked. Detected in the serum and cerebrospinal fluid of AIDS patient, VPR may also induce cell death to bystander cells. Its function is as follows. During virus entry, plays a role in the transport of the viral pre-integration (PIC) complex to the host nucleus. This function is crucial for viral infection of non-dividing macrophages. May act directly at the nuclear pore complex, by binding nucleoporins phenylalanine-glycine (FG)-repeat regions. In Human immunodeficiency virus type 1 group M subtype F1 (isolate VI850) (HIV-1), this protein is Protein Vpr.